A 138-amino-acid polypeptide reads, in one-letter code: ATP synthase epsilon chain (138 aa).

It belongs to the ATPase epsilon chain family. F-type ATPases have 2 components, CF(1) - the catalytic core - and CF(0) - the membrane proton channel. CF(1) has five subunits: alpha(3), beta(3), gamma(1), delta(1), epsilon(1). CF(0) has three main subunits: a, b and c.

The protein resides in the cell inner membrane. Its function is as follows. Produces ATP from ADP in the presence of a proton gradient across the membrane. In Cupriavidus metallidurans (strain ATCC 43123 / DSM 2839 / NBRC 102507 / CH34) (Ralstonia metallidurans), this protein is ATP synthase epsilon chain.